We begin with the raw amino-acid sequence, 304 residues long: N-acetyl-D-glucosamine kinase (304 aa).

Residues 4–11 (GFDIGGTK) and 133–140 (GFGGGLIF) each bind ATP. Positions 157, 178, 180, and 185 each coordinate Zn(2+).

It belongs to the ROK (NagC/XylR) family. NagK subfamily.

The enzyme catalyses N-acetyl-D-glucosamine + ATP = N-acetyl-D-glucosamine 6-phosphate + ADP + H(+). The protein operates within cell wall biogenesis; peptidoglycan recycling. In terms of biological role, catalyzes the phosphorylation of N-acetyl-D-glucosamine (GlcNAc) derived from cell-wall degradation, yielding GlcNAc-6-P. The chain is N-acetyl-D-glucosamine kinase from Mannheimia succiniciproducens (strain KCTC 0769BP / MBEL55E).